Here is a 29-residue protein sequence, read N- to C-terminus: Snaclec multactivase regulatory subunit (29 aa).

The C-type lectin domain maps to 1 to 29 (DCLPGWSVYEGRCYKVFNQKTWKAAEKFC). A disulfide bridge links cysteine 2 with cysteine 13.

This sequence belongs to the snaclec family. Heterodimer of a metalloproteinase subunit and a regulatory subunit comprising two homologous polypeptides disulfide-linked. As to expression, expressed by the venom gland.

The protein localises to the secreted. In terms of biological role, multactivase, a carinactivase-like calcium-dependent prothrombin activator, activates prothrombin via recognition of the calcium ion bound conformation of its gamma-carboxyglutamic acid (GLA) domain, and the subsequent conversion of prothrombin to active thrombin is catalyzed by the catalytic subunit. This chain is Snaclec multactivase regulatory subunit, found in Echis multisquamatus (Central Asian sand viper).